We begin with the raw amino-acid sequence, 891 residues long: Alanine--tRNA ligase (891 aa).

Zn(2+) contacts are provided by His564, His568, Cys681, and His685.

The protein belongs to the class-II aminoacyl-tRNA synthetase family. It depends on Zn(2+) as a cofactor.

It is found in the cytoplasm. The enzyme catalyses tRNA(Ala) + L-alanine + ATP = L-alanyl-tRNA(Ala) + AMP + diphosphate. Functionally, catalyzes the attachment of alanine to tRNA(Ala) in a two-step reaction: alanine is first activated by ATP to form Ala-AMP and then transferred to the acceptor end of tRNA(Ala). Also edits incorrectly charged Ser-tRNA(Ala) and Gly-tRNA(Ala) via its editing domain. The polypeptide is Alanine--tRNA ligase (Methylorubrum extorquens (strain PA1) (Methylobacterium extorquens)).